We begin with the raw amino-acid sequence, 74 residues long: Brevinin-2Ta (74 aa).

Positions 1 to 22 (MFTMKKSLLLFFFLGTISLSLC) are cleaved as a signal peptide. Residues 23-41 (QEERNADEDDGEMTEEEKR) constitute a propeptide that is removed on maturation. A disulfide bond links Cys-68 and Cys-74.

This sequence belongs to the frog skin active peptide (FSAP) family. Brevinin subfamily. As to expression, expressed by the skin glands.

The protein localises to the secreted. Its function is as follows. Antimicrobial peptide. This is Brevinin-2Ta from Rana temporaria (European common frog).